The chain runs to 344 residues: uncharacterized protein (344 aa).

5 consecutive transmembrane segments (helical) span residues 53–73 (FVVG…VSVW), 84–104 (WPIL…GYNI), 153–173 (IYPL…LYLL), 189–209 (FGAW…LEML), and 275–295 (IASE…VGVF).

The protein belongs to the steroid 5-alpha reductase family.

The protein resides in the endoplasmic reticulum membrane. This is an uncharacterized protein from Schizosaccharomyces pombe (strain 972 / ATCC 24843) (Fission yeast).